A 386-amino-acid polypeptide reads, in one-letter code: Succinate--CoA ligase [ADP-forming] subunit beta (386 aa).

In terms of domain architecture, ATP-grasp spans 9–244 (KDLLTAYQLP…PSQENIRDVL (236 aa)). Residues Lys46, 53 to 55 (GRG), Val102, and Glu107 contribute to the ATP site. 2 residues coordinate Mg(2+): Asn199 and Asp213. Substrate contacts are provided by residues Asn264 and 321-323 (GIM).

It belongs to the succinate/malate CoA ligase beta subunit family. Heterotetramer of two alpha and two beta subunits. Requires Mg(2+) as cofactor.

The enzyme catalyses succinate + ATP + CoA = succinyl-CoA + ADP + phosphate. It carries out the reaction GTP + succinate + CoA = succinyl-CoA + GDP + phosphate. Its pathway is carbohydrate metabolism; tricarboxylic acid cycle; succinate from succinyl-CoA (ligase route): step 1/1. Its function is as follows. Succinyl-CoA synthetase functions in the citric acid cycle (TCA), coupling the hydrolysis of succinyl-CoA to the synthesis of either ATP or GTP and thus represents the only step of substrate-level phosphorylation in the TCA. The beta subunit provides nucleotide specificity of the enzyme and binds the substrate succinate, while the binding sites for coenzyme A and phosphate are found in the alpha subunit. The chain is Succinate--CoA ligase [ADP-forming] subunit beta from Chlamydia trachomatis serovar A (strain ATCC VR-571B / DSM 19440 / HAR-13).